The sequence spans 237 residues: Pyridoxine 5'-phosphate synthase (237 aa).

The 3-amino-2-oxopropyl phosphate site is built by Asn7 and Arg18. His43 (proton acceptor) is an active-site residue. 1-deoxy-D-xylulose 5-phosphate-binding residues include Arg45 and His50. Glu70 functions as the Proton acceptor in the catalytic mechanism. 1-deoxy-D-xylulose 5-phosphate is bound at residue Thr100. The active-site Proton donor is the His190. 3-amino-2-oxopropyl phosphate is bound by residues Asp191 and 213–214 (GH).

This sequence belongs to the PNP synthase family. In terms of assembly, homooctamer; tetramer of dimers.

It localises to the cytoplasm. It carries out the reaction 3-amino-2-oxopropyl phosphate + 1-deoxy-D-xylulose 5-phosphate = pyridoxine 5'-phosphate + phosphate + 2 H2O + H(+). Its pathway is cofactor biosynthesis; pyridoxine 5'-phosphate biosynthesis; pyridoxine 5'-phosphate from D-erythrose 4-phosphate: step 5/5. Functionally, catalyzes the complicated ring closure reaction between the two acyclic compounds 1-deoxy-D-xylulose-5-phosphate (DXP) and 3-amino-2-oxopropyl phosphate (1-amino-acetone-3-phosphate or AAP) to form pyridoxine 5'-phosphate (PNP) and inorganic phosphate. The chain is Pyridoxine 5'-phosphate synthase from Flavobacterium johnsoniae (strain ATCC 17061 / DSM 2064 / JCM 8514 / BCRC 14874 / CCUG 350202 / NBRC 14942 / NCIMB 11054 / UW101) (Cytophaga johnsonae).